Here is a 436-residue protein sequence, read N- to C-terminus: Ribosomal protein uS12 methylthiotransferase RimO (436 aa).

Residues 2 to 114 enclose the MTTase N-terminal domain; the sequence is PNLYLVSLGC…IDEMILKKQN (113 aa). [4Fe-4S] cluster-binding residues include Cys-11, Cys-45, Cys-77, Cys-146, Cys-150, and Cys-153. Positions 132–363 constitute a Radical SAM core domain; that stretch reads TGSSYHAYIK…IKKQIEGSFK (232 aa). One can recognise a TRAM domain in the interval 363–434; sequence KSLVGEVIKV…KDKLIGEIIC (72 aa).

It belongs to the methylthiotransferase family. RimO subfamily. [4Fe-4S] cluster is required as a cofactor.

It localises to the cytoplasm. It catalyses the reaction L-aspartate(89)-[ribosomal protein uS12]-hydrogen + (sulfur carrier)-SH + AH2 + 2 S-adenosyl-L-methionine = 3-methylsulfanyl-L-aspartate(89)-[ribosomal protein uS12]-hydrogen + (sulfur carrier)-H + 5'-deoxyadenosine + L-methionine + A + S-adenosyl-L-homocysteine + 2 H(+). In terms of biological role, catalyzes the methylthiolation of an aspartic acid residue of ribosomal protein uS12. The chain is Ribosomal protein uS12 methylthiotransferase RimO from Campylobacter fetus subsp. fetus (strain 82-40).